The sequence spans 825 residues: Probable inorganic carbon transporter subunit DabA (825 aa).

Zn(2+)-binding residues include Cys-334, Asp-336, His-521, and Cys-536.

This sequence belongs to the inorganic carbon transporter (TC 9.A.2) DabA family. In terms of assembly, forms a complex with DabB. The cofactor is Zn(2+).

The protein localises to the cell inner membrane. Part of an energy-coupled inorganic carbon pump. This Acidithiobacillus ferrooxidans (strain ATCC 53993 / BNL-5-31) (Leptospirillum ferrooxidans (ATCC 53993)) protein is Probable inorganic carbon transporter subunit DabA.